We begin with the raw amino-acid sequence, 820 residues long: Serine/threonine-protein phosphatase 4 regulatory subunit 3-B (820 aa).

The region spanning 1-100 (MSDTRRRVKV…DEIWEKICQV (100 aa)) is the WH1 domain. Positions 682 to 694 (ELWFNEDDEEEGE) are enriched in acidic residues. Disordered regions lie at residues 682-711 (ELWF…DFPE) and 750-820 (AANG…RLGS). A compositionally biased stretch (basic and acidic residues) spans 701–711 (EKTKPEDDFPE). Polar residues-rich tracts occupy residues 750–761 (AANGANSTNSKS) and 768–790 (PATS…STKG). Residues 798-809 (YPDDEDEEEEED) show a composition bias toward acidic residues.

The protein belongs to the SMEK family. In terms of assembly, serine/threonine-protein phosphatase 4 (PP4) occurs in different assemblies of the catalytic and one or more regulatory subunits.

In terms of biological role, regulatory subunit of serine/threonine-protein phosphatase 4 (PP4). This Xenopus laevis (African clawed frog) protein is Serine/threonine-protein phosphatase 4 regulatory subunit 3-B.